The following is a 459-amino-acid chain: Endoglucanase CelA (459 aa).

The first 27 residues, 1 to 27 (MKRLLALLATGVSIVGLTALAGPPAQA), serve as a signal peptide directing secretion. A CBM2 domain is found at 28–134 (ATGCKAEYTI…TLNGATCSGS (107 aa)). Cysteine 31 and cysteine 131 are disulfide-bonded. The segment at 129-151 (ATCSGSVTDPPTDPPTDPPATGT) is disordered. Positions 136–147 (TDPPTDPPTDPP) are linker ('hinge') (Pro-Thr box). Residues 148–357 (ATGTPAAVNG…YAFHFYAASH (210 aa)) are catalytic. Glutamate 286 functions as the Proton donor in the catalytic mechanism. Glutamate 378 serves as the catalytic Nucleophile.

Belongs to the glycosyl hydrolase 5 (cellulase A) family. Post-translationally, the linker region (also termed 'hinge') may be a potential site for proteolysis.

The catalysed reaction is Endohydrolysis of (1-&gt;4)-beta-D-glucosidic linkages in cellulose, lichenin and cereal beta-D-glucans.. The sequence is that of Endoglucanase CelA (celA) from Streptomyces lividans.